The following is a 101-amino-acid chain: Large ribosomal subunit protein uL23 (101 aa).

It belongs to the universal ribosomal protein uL23 family. In terms of assembly, part of the 50S ribosomal subunit. Contacts protein L29, and trigger factor when it is bound to the ribosome.

In terms of biological role, one of the early assembly proteins it binds 23S rRNA. One of the proteins that surrounds the polypeptide exit tunnel on the outside of the ribosome. Forms the main docking site for trigger factor binding to the ribosome. This chain is Large ribosomal subunit protein uL23, found in Haemophilus ducreyi (strain 35000HP / ATCC 700724).